Consider the following 252-residue polypeptide: Major prion protein (252 aa).

The signal sequence occupies residues 1–22; the sequence is MANLGYWMLVLFVATWSDLGLC. An interaction with GRB2, ERI3 and SYN1 region spans residues 23 to 229; the sequence is KKRPKPGGWN…ESQAYYQRGS (207 aa). The disordered stretch occupies residues 26–104; sequence PKPGGWNTGG…HNQWNKPSKP (79 aa). 5 consecutive repeat copies span residues 51–58, 59–66, 67–74, 75–82, and 83–90. The interval 51-90 is 5 X 8 AA tandem repeats of P-H-G-G-G-W-G-Q; the sequence is PQGGGWGQPHGGGWGQPHGGGWGQPHGGGWGQPHGGGWGQ. Residues 52-92 show a composition bias toward gly residues; sequence QGGGWGQPHGGGWGQPHGGGWGQPHGGGWGQPHGGGWGQAG. Residues His-60, Gly-61, Gly-62, His-68, Gly-69, Gly-70, His-76, Gly-77, Gly-78, His-84, Gly-85, and Gly-86 each contribute to the Cu(2+) site. A disulfide bridge connects residues Cys-178 and Cys-213. Asn-180 and Asn-196 each carry an N-linked (GlcNAc...) asparagine glycan. Ser-229 is lipidated: GPI-anchor amidated serine. A propeptide spans 230–252 (removed in mature form); sequence SMVLFSSPPVILLISFLIFLIVG.

Belongs to the prion family. As to quaternary structure, monomer and homodimer. Has a tendency to aggregate into amyloid fibrils containing a cross-beta spine, formed by a steric zipper of superposed beta-strands. Soluble oligomers may represent an intermediate stage on the path to fibril formation. Copper binding may promote oligomerization. Interacts with GRB2, APP, ERI3/PRNPIP and SYN1. Mislocalized cytosolically exposed PrP interacts with MGRN1; this interaction alters MGRN1 subcellular location and causes lysosomal enlargement. Interacts with KIAA1191.

The protein localises to the cell membrane. It is found in the golgi apparatus. In terms of biological role, its primary physiological function is unclear. Has cytoprotective activity against internal or environmental stresses. May play a role in neuronal development and synaptic plasticity. May be required for neuronal myelin sheath maintenance. May play a role in iron uptake and iron homeostasis. Soluble oligomers are toxic to cultured neuroblastoma cells and induce apoptosis (in vitro). Association with GPC1 (via its heparan sulfate chains) targets PRNP to lipid rafts. Also provides Cu(2+) or Zn(2+) for the ascorbate-mediated GPC1 deaminase degradation of its heparan sulfate side chains. The chain is Major prion protein (PRNP) from Ateles paniscus (Black spider monkey).